We begin with the raw amino-acid sequence, 292 residues long: uncharacterized protein (292 aa).

The next 4 helical transmembrane spans lie at Leu-17–Leu-37, Leu-135–Leu-155, Thr-166–Val-186, and Phe-216–Tyr-236. Positions Glu-267–Glu-292 are disordered. The span at Glu-282–Glu-292 shows a compositional bias: acidic residues.

Its subcellular location is the membrane. This is an uncharacterized protein from Caenorhabditis elegans.